The chain runs to 426 residues: UDP-N-acetylglucosamine 1-carboxyvinyltransferase 2 (426 aa).

Lys-22–Asn-23 is a binding site for phosphoenolpyruvate. Arg-92 provides a ligand contact to UDP-N-acetyl-alpha-D-glucosamine. The active-site Proton donor is Asp-116. Residues Arg-121 to Gln-125, Asp-307, and Ile-329 each bind UDP-N-acetyl-alpha-D-glucosamine.

It belongs to the EPSP synthase family. MurA subfamily.

Its subcellular location is the cytoplasm. It carries out the reaction phosphoenolpyruvate + UDP-N-acetyl-alpha-D-glucosamine = UDP-N-acetyl-3-O-(1-carboxyvinyl)-alpha-D-glucosamine + phosphate. The protein operates within cell wall biogenesis; peptidoglycan biosynthesis. In terms of biological role, cell wall formation. Adds enolpyruvyl to UDP-N-acetylglucosamine. The sequence is that of UDP-N-acetylglucosamine 1-carboxyvinyltransferase 2 from Lactiplantibacillus plantarum (strain ATCC BAA-793 / NCIMB 8826 / WCFS1) (Lactobacillus plantarum).